Here is a 419-residue protein sequence, read N- to C-terminus: L-rhamnose isomerase (419 aa).

His262, Asp294, and Asp296 together coordinate Mn(2+).

This sequence belongs to the rhamnose isomerase family. In terms of assembly, homotetramer. Mn(2+) is required as a cofactor.

The protein localises to the cytoplasm. The catalysed reaction is L-rhamnopyranose = L-rhamnulose. Its pathway is carbohydrate degradation; L-rhamnose degradation; glycerone phosphate from L-rhamnose: step 1/3. Its function is as follows. Catalyzes the interconversion of L-rhamnose and L-rhamnulose. This is L-rhamnose isomerase from Klebsiella pneumoniae subsp. pneumoniae (strain ATCC 700721 / MGH 78578).